The following is a 154-amino-acid chain: Peptide methionine sulfoxide reductase MsrB (154 aa).

In terms of domain architecture, MsrB spans 28–150 (DQQWREQLSE…NSVSLIFNKI (123 aa)). Zn(2+) is bound by residues Cys67, Cys70, Cys116, and Cys119. The Nucleophile role is filled by Cys139.

The protein belongs to the MsrB Met sulfoxide reductase family. The cofactor is Zn(2+).

The enzyme catalyses L-methionyl-[protein] + [thioredoxin]-disulfide + H2O = L-methionyl-(R)-S-oxide-[protein] + [thioredoxin]-dithiol. The polypeptide is Peptide methionine sulfoxide reductase MsrB (Vibrio vulnificus (strain CMCP6)).